The primary structure comprises 322 residues: Beta-1,4-galactosyltransferase 7 (322 aa).

The Cytoplasmic segment spans residues 1–9 (MVNISTINW). A helical; Signal-anchor for type II membrane protein membrane pass occupies residues 10 to 30 (VFVCGLSFCLGGIAVLSLMPL). The Lumenal segment spans residues 31-322 (GSDCVCPLSN…TAAAASAVQT (292 aa)). UDP-alpha-D-galactose is bound by residues Pro82, Arg84, Asp145, and Val146. Residue Asp147 participates in Mn(2+) binding. UDP-alpha-D-galactose-binding residues include Tyr177, Gly185, Trp207, and Gly208. Residue Leu209 coordinates beta-D-xylose. A UDP-alpha-D-galactose-binding site is contributed by Glu210. Asp211 and Asp212 together coordinate beta-D-xylose. The N-linked (GlcNAc...) asparagine glycan is linked to Asn236. UDP-alpha-D-galactose contacts are provided by His241, His243, and Arg250. Mn(2+)-binding residues include His241 and His243. 2 disulfides stabilise this stretch: Cys255/Cys310 and Cys300/Cys308.

The protein belongs to the glycosyltransferase 7 family. Mn(2+) is required as a cofactor. As to expression, expressed in male and female adults. Expressed in head.

The protein localises to the golgi apparatus membrane. It catalyses the reaction 3-O-(beta-D-xylosyl)-L-seryl-[protein] + UDP-alpha-D-galactose = 3-O-(beta-D-galactosyl-(1-&gt;4)-beta-D-xylosyl)-L-seryl-[protein] + UDP + H(+). It participates in protein modification; protein glycosylation. Its function is as follows. Transfers galactose from UDP-D-Galactose (UDP-Gal) to the acceptor xylose residue in the linkage tetrasaccharide region of the glycosaminoglycan side chain of proteoglycans. No activity towards beta-GlcNAc, beta-Glc, beta-Gal, and beta-GalNAc as acceptors. This chain is Beta-1,4-galactosyltransferase 7, found in Drosophila melanogaster (Fruit fly).